The chain runs to 154 residues: Fimbrial protein (154 aa).

A propeptide spans 1-6 (MKAQKG) (leader sequence). Phenylalanine 7 is subject to N-methylphenylalanine. The chain crosses the membrane as a helical span at residues 7–27 (FTLIELMIVVAIIGILAAIAI). Cysteine 133 and cysteine 151 form a disulfide bridge.

This sequence belongs to the N-Me-Phe pilin family. In terms of assembly, the pili are polar flexible filaments of about 5.4 nanometers diameter and 2.5 micrometers average length; they consist of only a single polypeptide chain arranged in a helical configuration of five subunits per turn in the assembled pilus.

Its subcellular location is the fimbrium. The protein localises to the membrane. The protein is Fimbrial protein (pilA) of Pseudomonas aeruginosa.